We begin with the raw amino-acid sequence, 339 residues long: tRNA N6-adenosine threonylcarbamoyltransferase (339 aa).

The Fe cation site is built by H111 and H115. Residues 139–143 (LVSGG), D172, G185, D189, and N280 contribute to the substrate site. Position 308 (D308) interacts with Fe cation.

Belongs to the KAE1 / TsaD family. Fe(2+) serves as cofactor.

Its subcellular location is the cytoplasm. The catalysed reaction is L-threonylcarbamoyladenylate + adenosine(37) in tRNA = N(6)-L-threonylcarbamoyladenosine(37) in tRNA + AMP + H(+). Required for the formation of a threonylcarbamoyl group on adenosine at position 37 (t(6)A37) in tRNAs that read codons beginning with adenine. Is involved in the transfer of the threonylcarbamoyl moiety of threonylcarbamoyl-AMP (TC-AMP) to the N6 group of A37, together with TsaE and TsaB. TsaD likely plays a direct catalytic role in this reaction. In Bacteroides fragilis (strain ATCC 25285 / DSM 2151 / CCUG 4856 / JCM 11019 / LMG 10263 / NCTC 9343 / Onslow / VPI 2553 / EN-2), this protein is tRNA N6-adenosine threonylcarbamoyltransferase.